A 118-amino-acid polypeptide reads, in one-letter code: UPF0102 protein Bcav_2532 (118 aa).

Belongs to the UPF0102 family.

The protein is UPF0102 protein Bcav_2532 of Beutenbergia cavernae (strain ATCC BAA-8 / DSM 12333 / CCUG 43141 / JCM 11478 / NBRC 16432 / NCIMB 13614 / HKI 0122).